Reading from the N-terminus, the 755-residue chain is uncharacterized protein (755 aa).

Helical transmembrane passes span 46–66, 70–90, 93–113, 118–138, 143–163, 411–431, 446–466, 482–502, and 514–534; these read LGLG…GGLY, LKTI…GTIV, GWGL…YLAV, GAMV…NVST, FTSL…IWPF, IAHL…IFVL, LLGT…IQDP, ALLR…ALIL, and ALLS…GLAF.

Belongs to the YccS/YhfK family.

The protein resides in the cell membrane. This is an uncharacterized protein from Synechocystis sp. (strain ATCC 27184 / PCC 6803 / Kazusa).